A 427-amino-acid chain; its full sequence is Enolase (427 aa).

Gln163 is a binding site for (2R)-2-phosphoglycerate. The active-site Proton donor is Glu205. Residues Asp242, Glu285, and Asp312 each coordinate Mg(2+). (2R)-2-phosphoglycerate is bound by residues Lys337, Arg366, Ser367, and Lys388. Lys337 (proton acceptor) is an active-site residue.

It belongs to the enolase family. Mg(2+) serves as cofactor.

Its subcellular location is the cytoplasm. The protein localises to the secreted. It is found in the cell surface. It carries out the reaction (2R)-2-phosphoglycerate = phosphoenolpyruvate + H2O. It participates in carbohydrate degradation; glycolysis; pyruvate from D-glyceraldehyde 3-phosphate: step 4/5. Its function is as follows. Catalyzes the reversible conversion of 2-phosphoglycerate (2-PG) into phosphoenolpyruvate (PEP). It is essential for the degradation of carbohydrates via glycolysis. In Methylocella silvestris (strain DSM 15510 / CIP 108128 / LMG 27833 / NCIMB 13906 / BL2), this protein is Enolase.